Reading from the N-terminus, the 127-residue chain is uncharacterized protein (127 aa).

3 helical membrane-spanning segments follow: residues 16–36 (AVIG…CYVI), 59–79 (LVGA…SFLF), and 100–120 (IIGF…GGVI).

It localises to the cell membrane. This is an uncharacterized protein from Methanocaldococcus jannaschii (strain ATCC 43067 / DSM 2661 / JAL-1 / JCM 10045 / NBRC 100440) (Methanococcus jannaschii).